The primary structure comprises 750 residues: Elastin (750 aa).

An N-terminal signal peptide occupies residues 1 to 24; it reads ARQAAAPLLPGVLLLFSILPASQQ. P32, P67, P102, P176, P189, P192, and P211 each carry 4-hydroxyproline. Repeat 1 spans residues 83-127; the sequence is GAGVGGLGAGLGAFPGAAFPGAASAAALKAAAKAGAGLGGVGGIG. The interval 83–686 is 8 X tandem repeats; it reads GAGVGGLGAG…GVGGLGVGGL (604 aa). 7 repeat units span residues 219–262, 263–318, 319–393, 394–482, 483–554, 555–619, and 620–686. A 4-hydroxyproline mark is found at P276, P345, P363, P368, P441, P455, and P480. P576, P635, and P720 each carry 4-hydroxyproline. C739 and C745 form a disulfide bridge.

The protein belongs to the elastin family. The polymeric elastin chains are cross-linked together into an extensible 3D network. Post-translationally, elastin is formed through the cross-linking of its soluble precursor tropoelastin. Cross-linking is initiated through the action of lysyl oxidase on exposed lysines to form allysine. Subsequent spontaneous condensation reactions with other allysine or unmodified lysine residues result in various bi-, tri-, and tetrafunctional cross-links. The most abundant cross-links in mature elastin fibers are lysinonorleucine, allysine aldol, desmosine, and isodesmosine. Hydroxylated on proline residues. In terms of processing, hydroxylation on proline residues within the sequence motif, GXPG, is most likely to be 4-hydroxy as this fits the requirement for 4-hydroxylation in vertebrates.

The protein resides in the secreted. Its subcellular location is the extracellular space. It is found in the extracellular matrix. Its function is as follows. Major structural protein of tissues such as aorta and nuchal ligament, which must expand rapidly and recover completely. The chain is Elastin (ELN) from Gallus gallus (Chicken).